Here is a 248-residue protein sequence, read N- to C-terminus: UPF0524 protein C3orf70 homolog (248 aa).

The tract at residues K169–V248 is disordered. Over residues S200–E227 the composition is skewed to acidic residues.

The protein belongs to the UPF0524 family.

May play a role in neuronal and neurobehavioral development. The polypeptide is UPF0524 protein C3orf70 homolog (Mus musculus (Mouse)).